A 397-amino-acid chain; its full sequence is Phosphoglycerate kinase (397 aa).

Substrate-binding positions include 21-23 (DFN), R37, 60-63 (HLGR), R119, and R152. Residues K203, G294, E325, and 354 to 357 (GGDS) contribute to the ATP site.

Belongs to the phosphoglycerate kinase family. In terms of assembly, monomer.

It is found in the cytoplasm. It carries out the reaction (2R)-3-phosphoglycerate + ATP = (2R)-3-phospho-glyceroyl phosphate + ADP. It functions in the pathway carbohydrate degradation; glycolysis; pyruvate from D-glyceraldehyde 3-phosphate: step 2/5. In Chlorobium phaeobacteroides (strain DSM 266 / SMG 266 / 2430), this protein is Phosphoglycerate kinase.